The sequence spans 35 residues: Thionin NsW2 (35 aa).

3 disulfide bridges follow: Cys-4–Cys-32, Cys-12–Cys-30, and Cys-16–Cys-26.

In terms of processing, contains 4 disulfide bonds.

It is found in the secreted. Functionally, antimicrobial peptide disrupting membranes. Has antibacterial against Gram-positive bacteria S.aureus (MIC=6.5 uM) and B.subtilis (MIC=3.25 uM) but not against Gram-negative bacterium E.coli. Has antifungal activity against C.albicans (MIC=3.25 uM). The protein is Thionin NsW2 of Nigella sativa (Black cumin).